Consider the following 380-residue polypeptide: Probable protein phosphatase 2C 34 (380 aa).

The 304-residue stretch at 32–335 (AAGEFSMAAA…DDISVIVVYL (304 aa)) folds into the PPM-type phosphatase domain. Mn(2+) contacts are provided by aspartate 66, glycine 67, aspartate 267, and aspartate 326.

The protein belongs to the PP2C family. Requires Mg(2+) as cofactor. Mn(2+) serves as cofactor.

The enzyme catalyses O-phospho-L-seryl-[protein] + H2O = L-seryl-[protein] + phosphate. It carries out the reaction O-phospho-L-threonyl-[protein] + H2O = L-threonyl-[protein] + phosphate. This Oryza sativa subsp. indica (Rice) protein is Probable protein phosphatase 2C 34 (BIPP2C2).